The sequence spans 340 residues: Putative Ig-like domain-containing protein C1 (340 aa).

Residues 207-294 enclose the Ig-like domain; it reads PTVTVTGIER…SSPRVMVPTI (88 aa).

This Sus scrofa (Pig) protein is Putative Ig-like domain-containing protein C1.